Here is a 240-residue protein sequence, read N- to C-terminus: UDP-2,3-diacylglucosamine hydrolase (240 aa).

Mn(2+) is bound by residues Asp8, His10, Asp41, Asn79, and His114. Residue 79–80 (NR) participates in substrate binding. Substrate is bound by residues Asp122, Ser160, Asn164, Lys167, and His195. Mn(2+) contacts are provided by His195 and His197.

The protein belongs to the LpxH family. Mn(2+) is required as a cofactor.

The protein resides in the cell inner membrane. The protein localises to the cytoplasm. It catalyses the reaction UDP-2-N,3-O-bis[(3R)-3-hydroxytetradecanoyl]-alpha-D-glucosamine + H2O = 2-N,3-O-bis[(3R)-3-hydroxytetradecanoyl]-alpha-D-glucosaminyl 1-phosphate + UMP + 2 H(+). The protein operates within glycolipid biosynthesis; lipid IV(A) biosynthesis; lipid IV(A) from (3R)-3-hydroxytetradecanoyl-[acyl-carrier-protein] and UDP-N-acetyl-alpha-D-glucosamine: step 4/6. With respect to regulation, inhibited by a sulfonyl piperazine compound that shows antibacterial activity against E.coli; LpxH is the cellular target of this compound. Inhibited by 0.01% (or more) Triton X-100 in vitro. Its function is as follows. Hydrolyzes the pyrophosphate bond of UDP-2,3-diacylglucosamine to yield 2,3-diacylglucosamine 1-phosphate (lipid X) and UMP by catalyzing the attack of water at the alpha-P atom. Involved in the biosynthesis of lipid A, a phosphorylated glycolipid that anchors the lipopolysaccharide to the outer membrane of the cell. Is essential for E.coli growth. Does not cleave the unacylated UDP-GlcNAc, the mono-acylated UDP-3-O-(R)-3-hydroxymyristoyl-GlcNAc, and CDP-diacylglycerol. The polypeptide is UDP-2,3-diacylglucosamine hydrolase (Escherichia coli (strain K12)).